Reading from the N-terminus, the 312-residue chain is Ribosomal protein L11 methyltransferase (312 aa).

The S-adenosyl-L-methionine site is built by Thr-162, Gly-183, Asp-205, and Asn-248.

It belongs to the methyltransferase superfamily. PrmA family.

It is found in the cytoplasm. It carries out the reaction L-lysyl-[protein] + 3 S-adenosyl-L-methionine = N(6),N(6),N(6)-trimethyl-L-lysyl-[protein] + 3 S-adenosyl-L-homocysteine + 3 H(+). Functionally, methylates ribosomal protein L11. In Bacillus cereus (strain B4264), this protein is Ribosomal protein L11 methyltransferase.